The chain runs to 251 residues: HTH-type transcriptional regulator UlaR (251 aa).

The 56-residue stretch at 3 to 58 folds into the HTH deoR-type domain; it reads EAQRHQILLEMLAQLGFVTVEKVVERLGISPATARRDINKLDERGKLKKVRNGAEA. Residues 20–39 constitute a DNA-binding region (H-T-H motif); that stretch reads VTVEKVVERLGISPATARRD.

The protein localises to the cytoplasm. Functionally, represses ulaG and the ulaABCDEF operon. This is HTH-type transcriptional regulator UlaR from Shigella sonnei (strain Ss046).